Consider the following 197-residue polypeptide: Phospholipid hydroperoxide glutathione peroxidase (197 aa).

S40 carries the phosphoserine modification. Residue U73 is part of the active site. Position 73 (U73) is a non-standard amino acid, selenocysteine.

The protein belongs to the glutathione peroxidase family. As to quaternary structure, monomer. Has a tendency to form higher mass oligomers. Interacts with FUNDC1; this interaction promotes GPX4 recruitment into mitochondria through TOM/TIM complex where it is degraded by mitophagy.

Its subcellular location is the mitochondrion. The protein localises to the cytoplasm. It carries out the reaction a hydroperoxy polyunsaturated fatty acid + 2 glutathione = a hydroxy polyunsaturated fatty acid + glutathione disulfide + H2O. The catalysed reaction is (12S)-hydroperoxy-(5Z,8Z,10E,14Z)-eicosatetraenoate + 2 glutathione = (12S)-hydroxy-(5Z,8Z,10E,14Z)-eicosatetraenoate + glutathione disulfide + H2O. The enzyme catalyses (13S)-hydroperoxy-(9Z,11E)-octadecadienoate + 2 glutathione = (13S)-hydroxy-(9Z,11E)-octadecadienoate + glutathione disulfide + H2O. Essential antioxidant peroxidase that directly reduces phospholipid hydroperoxide even if they are incorporated in membranes and lipoproteins. Can also reduce fatty acid hydroperoxide, cholesterol hydroperoxide and thymine hydroperoxide. Plays a key role in protecting cells from oxidative damage by preventing membrane lipid peroxidation. Required to prevent cells from ferroptosis, a non-apoptotic cell death resulting from an iron-dependent accumulation of lipid reactive oxygen species. The presence of selenocysteine (Sec) versus Cys at the active site is essential for life: it provides resistance to overoxidation and prevents cells against ferroptosis. The presence of Sec at the active site is also essential for the survival of a specific type of parvalbumin-positive interneurons, thereby preventing against fatal epileptic seizures. May be required to protect cells from the toxicity of ingested lipid hydroperoxides. Required for normal sperm development and male fertility. Essential for maturation and survival of photoreceptor cells. Plays a role in a primary T-cell response to viral and parasitic infection by protecting T-cells from ferroptosis and by supporting T-cell expansion. Plays a role of glutathione peroxidase in platelets in the arachidonic acid metabolism. Reduces hydroperoxy ester lipids formed by a 15-lipoxygenase that may play a role as down-regulator of the cellular 15-lipoxygenase pathway. The sequence is that of Phospholipid hydroperoxide glutathione peroxidase from Sapajus apella (Brown-capped capuchin).